A 367-amino-acid chain; its full sequence is Glutamate 5-kinase (367 aa).

Position 10 (Lys10) interacts with ATP. Residues Ser50, Asp137, and Asn149 each contribute to the substrate site. Residues 169–170 and 211–217 each bind ATP; these read TD and TGGMATK. The PUA domain occupies 275–353; the sequence is AGVIIVDNGA…QEISQILGYE (79 aa).

Belongs to the glutamate 5-kinase family.

Its subcellular location is the cytoplasm. The catalysed reaction is L-glutamate + ATP = L-glutamyl 5-phosphate + ADP. It functions in the pathway amino-acid biosynthesis; L-proline biosynthesis; L-glutamate 5-semialdehyde from L-glutamate: step 1/2. Its function is as follows. Catalyzes the transfer of a phosphate group to glutamate to form L-glutamate 5-phosphate. In Proteus mirabilis (strain HI4320), this protein is Glutamate 5-kinase.